The primary structure comprises 300 residues: Tetrahydromethanopterin S-methyltransferase subunit E (300 aa).

Transmembrane regions (helical) follow at residues 62-82 (PVSY…LMGM), 86-106 (PILA…AYSV), 135-155 (PIVG…YLAV), 158-178 (LGNP…VGAI), 226-246 (YFCS…IIFL), and 261-281 (LITK…TTLL).

The protein belongs to the MtrE family. As to quaternary structure, the complex is composed of 8 subunits; MtrA, MtrB, MtrC, MtrD, MtrE, MtrF, MtrG and MtrH.

The protein resides in the cell membrane. It carries out the reaction 5-methyl-5,6,7,8-tetrahydromethanopterin + coenzyme M + 2 Na(+)(in) = 5,6,7,8-tetrahydromethanopterin + methyl-coenzyme M + 2 Na(+)(out). The protein operates within one-carbon metabolism; methanogenesis from CO(2); methyl-coenzyme M from 5,10-methylene-5,6,7,8-tetrahydromethanopterin: step 2/2. Its function is as follows. Part of a complex that catalyzes the formation of methyl-coenzyme M and tetrahydromethanopterin from coenzyme M and methyl-tetrahydromethanopterin. This is an energy-conserving, sodium-ion translocating step. This is Tetrahydromethanopterin S-methyltransferase subunit E from Methanococcus aeolicus (strain ATCC BAA-1280 / DSM 17508 / OCM 812 / Nankai-3).